The primary structure comprises 371 residues: Flagellar P-ring protein (371 aa).

Residues methionine 1–alanine 28 form the signal peptide.

It belongs to the FlgI family. The basal body constitutes a major portion of the flagellar organelle and consists of four rings (L,P,S, and M) mounted on a central rod.

The protein localises to the periplasm. The protein resides in the bacterial flagellum basal body. Functionally, assembles around the rod to form the L-ring and probably protects the motor/basal body from shearing forces during rotation. The protein is Flagellar P-ring protein of Anaeromyxobacter dehalogenans (strain 2CP-C).